The primary structure comprises 36 residues: Histone H1-like protein EM5 (36 aa).

One can recognise an H15 domain in the interval 1–36 (MITAAVGALKERGGSSRQAILKYIQANFKVQANPAA).

It belongs to the histone H1/H5 family. Sperm.

It localises to the nucleus. Its subcellular location is the chromosome. This chain is Histone H1-like protein EM5, found in Ensis minor (Razor shell).